Consider the following 797-residue polypeptide: Short transient receptor potential channel 4-associated protein (797 aa).

An N-acetylalanine modification is found at Ala2. The interaction with TNFRSF1A stretch occupies residues 2–400 (AAAPVAAGSG…VLYVLCVLLM (399 aa)).

As to quaternary structure, component of the DCX(TRPC4AP) E3 ubiquitin ligase complex, at least composed of CUL4A, DDB1, TRPC4AP/TRUSS and RBX1. Interacts with MYC. Constitutively associated with TNFRSF1A. Directly interacts with TRADD, TRAF2, CHUK, IKBKB and IKBKG. Interacts with TRPC1, TRPC4 and TRPC5. (Microbial infection) Interacts with Hepatitis B virus (HBV) protein X; leading to prevent ubiquitination of TRPC4AP by SKP2. Phosphorylated by GSK3B; phosphorylation is required for ubiquitination. Post-translationally, ubiquitinated by a SCF (SKP1-CUL1-F-box protein) E3 ubiquitin-protein ligase containing SKP2, leading to its degradation. Phosphorylation by GSK3B is required for ubiquitination.

It is found in the cytoplasm. The protein resides in the perinuclear region. The protein operates within protein modification; protein ubiquitination. Functionally, substrate-recognition component of a DCX (DDB1-CUL4-X-box) E3 ubiquitin-protein ligase complex required for cell cycle control. The DCX(TRPC4AP) complex specifically mediates the polyubiquitination and subsequent degradation of MYC as part of the DesCEND (destruction via C-end degrons) pathway. The DesCEND (destruction via C-end degrons) pathway recognizes a C-degron located at the extreme C terminus of target proteins, leading to their ubiquitination and degradation. The DCX(TRPC4AP) complex specifically recognizes proteins with an arginine at the minus 3 position (R-3 motif) at the C-terminus, such as MYC, leading to their ubiquitination and degradation. Also participates in the activation of NFKB1 in response to ligation of TNFRSF1A, possibly by linking TNFRSF1A to the IKK signalosome. Involved in JNK activation via its interaction with TRAF2. Also involved in elevation of endoplasmic reticulum Ca(2+) storage reduction in response to CHRM1. This chain is Short transient receptor potential channel 4-associated protein, found in Homo sapiens (Human).